We begin with the raw amino-acid sequence, 154 residues long: Myoglobin (154 aa).

Residues 2-148 (GLSDGEWQLV…FRNDIAAKYK (147 aa)) form the Globin domain. At Ser4 the chain carries Phosphoserine. His65 provides a ligand contact to nitrite. O2 is bound at residue His65. A Phosphothreonine modification is found at Thr68. Heme b is bound at residue His94.

It belongs to the globin family. As to quaternary structure, monomeric.

It is found in the cytoplasm. Its subcellular location is the sarcoplasm. The enzyme catalyses Fe(III)-heme b-[protein] + nitric oxide + H2O = Fe(II)-heme b-[protein] + nitrite + 2 H(+). It catalyses the reaction H2O2 + AH2 = A + 2 H2O. Functionally, monomeric heme protein which primary function is to store oxygen and facilitate its diffusion within muscle tissues. Reversibly binds oxygen through a pentacoordinated heme iron and enables its timely and efficient release as needed during periods of heightened demand. Depending on the oxidative conditions of tissues and cells, and in addition to its ability to bind oxygen, it also has a nitrite reductase activity whereby it regulates the production of bioactive nitric oxide. Under stress conditions, like hypoxia and anoxia, it also protects cells against reactive oxygen species thanks to its pseudoperoxidase activity. This chain is Myoglobin (MB), found in Otolemur crassicaudatus (Brown greater galago).